The following is a 610-amino-acid chain: C4b-binding protein alpha chain (610 aa).

The N-terminal stretch at 1–48 (MKHQRVPVMILHSKGTMASWPFSRLWSISDPILFQVTLVATLLATVLG) is a signal peptide. Sushi domains follow at residues 49–109 (SCGI…FCVK), 110–171 (KRCE…QCII), 172–236 (AKCE…SCKK), 237–296 (VICV…TCEL), 297–364 (NGCL…ECKE), 365–427 (VCCP…ECRP), 428–485 (DCKS…QCKA), and 486–543 (LCLK…KCEW). 16 disulfide bridges follow: Cys50-Cys95, Cys80-Cys107, Cys112-Cys153, Cys139-Cys169, Cys174-Cys217, Cys203-Cys234, Cys239-Cys281, Cys267-Cys294, Cys299-Cys350, Cys334-Cys362, Cys367-Cys412, Cys402-Cys425, Cys429-Cys471, Cys457-Cys483, Cys487-Cys528, and Cys514-Cys541. Asn66 is a glycosylation site (N-linked (GlcNAc...) asparagine). Asn221 carries N-linked (GlcNAc...) asparagine glycosylation. Residues Asn525 and Asn602 are each glycosylated (N-linked (GlcNAc...) asparagine).

As to quaternary structure, disulfide-linked complex of alpha and beta chains.

It is found in the secreted. Controls the classical pathway of complement activation. It binds as a cofactor to C3b/C4b inactivator (C3bINA), which then hydrolyzes the complement fragment C4b. It also accelerates the degradation of the C4bC2a complex (C3 convertase) by dissociating the complement fragment C2a. Alpha chain binds C4b. It also interacts with serum amyloid P component. This Bos taurus (Bovine) protein is C4b-binding protein alpha chain (C4BPA).